A 422-amino-acid chain; its full sequence is Carboxypeptidase B2 (422 aa).

The first 21 residues, 1–21 (MKLYGLGVLVAIILYEKHGLA), serve as a signal peptide directing secretion. Positions 22–113 (FQSGHVLSAL…QTSNDTVSPR (92 aa)) are cleaved as a propeptide — activation peptide. N43, N72, N84, and N107 each carry an N-linked (GlcNAc...) asparagine glycan. The 298-residue stretch at 121 to 418 (QYHSLNEIYS…AAVSKIAWHV (298 aa)) folds into the Peptidase M14 domain. C177 and C190 form a disulfide bridge. Zn(2+) contacts are provided by H180 and E183. Substrate-binding positions include 180–183 (HARE) and R238. N-linked (GlcNAc...) asparagine glycosylation occurs at N240. 2 disulfides stabilise this stretch: C249-C273 and C264-C278. Residue 255–256 (NR) participates in substrate binding. H309 contributes to the Zn(2+) binding site. 310–311 (SY) lines the substrate pocket. N-linked (GlcNAc...) asparagine glycosylation is present at N322. Y362 is a substrate binding site. The active-site Proton donor/acceptor is E384.

The protein belongs to the peptidase M14 family. Requires Zn(2+) as cofactor. In terms of tissue distribution, plasma; synthesized in the liver.

Its subcellular location is the secreted. The enzyme catalyses Release of C-terminal Arg and Lys from a polypeptide.. Its activity is regulated as follows. TAFI/CPB2 is unique among carboxypeptidases in that it spontaneously inactivates with a short half-life, a property that is crucial for its role in controlling blood clot lysis. The zymogen is stabilized by interactions with the activation peptide. Release of the activation peptide increases a dynamic flap mobility and in time this leads to conformational changes that disrupt the catalytic site and expose a cryptic thrombin-cleavage site present at Arg-323. In terms of biological role, cleaves C-terminal arginine or lysine residues from biologically active peptides such as kinins or anaphylatoxins in the circulation thereby regulating their activities. Down-regulates fibrinolysis by removing C-terminal lysine residues from fibrin that has already been partially degraded by plasmin. This is Carboxypeptidase B2 (Cpb2) from Rattus norvegicus (Rat).